The primary structure comprises 347 residues: tRNA pseudouridine synthase D (347 aa).

Aspartate 81 (nucleophile) is an active-site residue. The 147-residue stretch at 158–304 (GVPNYFGNQR…MRHDRRAIAL (147 aa)) folds into the TRUD domain.

The protein belongs to the pseudouridine synthase TruD family.

It catalyses the reaction uridine(13) in tRNA = pseudouridine(13) in tRNA. In terms of biological role, responsible for synthesis of pseudouridine from uracil-13 in transfer RNAs. The protein is tRNA pseudouridine synthase D of Vibrio vulnificus (strain CMCP6).